A 375-amino-acid polypeptide reads, in one-letter code: Pulmonary surfactant-associated protein D (375 aa).

The signal sequence occupies residues 1-20; that stretch reads MLLFLLSALVLLTQPLGYLE. An S-nitrosocysteine mark is found at cysteine 35 and cysteine 40. Positions 45 to 221 are disordered; it reads SGLPGRDGRD…DKGAKGESGL (177 aa). Residues 46-222 enclose the Collagen-like domain; sequence GLPGRDGRDG…KGAKGESGLP (177 aa). Basic and acidic residues predominate over residues 50–65; that stretch reads RDGRDGREGPRGEKGD. Positions 66 to 86 are enriched in low complexity; it reads PGLPGAAGQAGMPGQAGPVGP. Proline 78 is subject to 4-hydroxyproline. Lysine 87 carries the post-translational modification 5-hydroxylysine. The N-linked (GlcNAc...) asparagine glycan is linked to asparagine 90. Proline 96 bears the 4-hydroxyproline mark. Lysine 99 is modified (5-hydroxylysine). The span at 105–114 shows a compositional bias: pro residues; it reads SGPPGPPGVP. 2 stretches are compositionally biased toward low complexity: residues 116-132 and 138-150; these read PAGR…IGPQ and KGEA…VGAP. 2 positions are modified to 4-hydroxyproline: proline 171 and proline 177. Over residues 204–216 the composition is skewed to basic and acidic residues; it reads KGDKGIPGDKGAK. A coiled-coil region spans residues 223-252; sequence DVASLRQQVEALQGQVQHLQAAFSQYKKVE. Residues 260–375 enclose the C-type lectin domain; that stretch reads VGEKIFKTAG…GEKRLVVCEF (116 aa). Intrachain disulfides connect cysteine 281-cysteine 373 and cysteine 351-cysteine 365.

It belongs to the SFTPD family. As to quaternary structure, oligomeric complex of 4 set of homotrimers. Post-translationally, the N-terminus is blocked. Hydroxylation on proline residues within the sequence motif, GXPG, is most likely to be 4-hydroxy as this fits the requirement for 4-hydroxylation in vertebrates. In terms of processing, S-nitrosylation at Cys-35 and Cys-40 alters the quaternary structure which results in a pro-inflammatory chemoattractive signaling activity with macrophages. As to expression, expressed in lung, brain, pancreas and adipose tissue (mainly mature adipocytes).

The protein localises to the secreted. The protein resides in the extracellular space. Its subcellular location is the extracellular matrix. It localises to the surface film. Functionally, contributes to the lung's defense against inhaled microorganisms, organic antigens and toxins. Interacts with compounds such as bacterial lipopolysaccharides, oligosaccharides and fatty acids and modulates leukocyte action in immune response. May participate in the extracellular reorganization or turnover of pulmonary surfactant. Binds strongly maltose residues and to a lesser extent other alpha-glucosyl moieties. This is Pulmonary surfactant-associated protein D (SFTPD) from Homo sapiens (Human).